A 345-amino-acid chain; its full sequence is MSIQVSGLCKHFGQFTALNNVSIEFPSGGLVALLGPSGCGKTSLLRVIAGLERPDSGTVAIQNRDVSGLDIRERQVGFVFQHYALFRHMTIFENVAFGLRAKPKARRPNEATIKQKVNRLLQLVQLDWLADRYPAQLSGGQRQRVALARALAIEPQVLLLDEPFGALDAKVRKELRRWLRKLHDELHITSLFVTHDQEEALEVADHIVVMNKGQIEQIGTPEEIYRTPRTEFVYQFVGSSNRLYLEDSNGLSFTPSDVVSTHGKQAKRIYCRPHDFAVNTQHRPDAIPVAVARKLALGNMVRLEAYSLDNQQLVEVELSNHDPVLDEIQAKRHLWLTPKTVSQFA.

Residues 3–237 (IQVSGLCKHF…PRTEFVYQFV (235 aa)) form the ABC transporter domain. Position 35-42 (35-42 (GPSGCGKT)) interacts with ATP.

The protein belongs to the ABC transporter superfamily. Sulfate/tungstate importer (TC 3.A.1.6) family. In terms of assembly, the complex is composed of two ATP-binding proteins (CysA), two transmembrane proteins (CysT and CysW) and a solute-binding protein (CysP).

The protein localises to the cell inner membrane. The catalysed reaction is sulfate(out) + ATP + H2O = sulfate(in) + ADP + phosphate + H(+). It carries out the reaction thiosulfate(out) + ATP + H2O = thiosulfate(in) + ADP + phosphate + H(+). In terms of biological role, part of the ABC transporter complex CysAWTP involved in sulfate/thiosulfate import. Responsible for energy coupling to the transport system. The chain is Sulfate/thiosulfate import ATP-binding protein CysA from Vibrio vulnificus (strain CMCP6).